We begin with the raw amino-acid sequence, 420 residues long: Serine hydroxymethyltransferase (420 aa).

(6S)-5,6,7,8-tetrahydrofolate-binding positions include Leu-121 and 125–127 (GHL). Lys-230 is subject to N6-(pyridoxal phosphate)lysine. (6S)-5,6,7,8-tetrahydrofolate contacts are provided by residues Glu-246 and 354–356 (SPF).

The protein belongs to the SHMT family. In terms of assembly, homodimer. The cofactor is pyridoxal 5'-phosphate.

The protein resides in the cytoplasm. The enzyme catalyses (6R)-5,10-methylene-5,6,7,8-tetrahydrofolate + glycine + H2O = (6S)-5,6,7,8-tetrahydrofolate + L-serine. It functions in the pathway one-carbon metabolism; tetrahydrofolate interconversion. Its pathway is amino-acid biosynthesis; glycine biosynthesis; glycine from L-serine: step 1/1. Functionally, catalyzes the reversible interconversion of serine and glycine with tetrahydrofolate (THF) serving as the one-carbon carrier. This reaction serves as the major source of one-carbon groups required for the biosynthesis of purines, thymidylate, methionine, and other important biomolecules. Also exhibits THF-independent aldolase activity toward beta-hydroxyamino acids, producing glycine and aldehydes, via a retro-aldol mechanism. This Rickettsia canadensis (strain McKiel) protein is Serine hydroxymethyltransferase.